Here is a 981-residue protein sequence, read N- to C-terminus: Rab3 GTPase-activating protein catalytic subunit (981 aa).

Serine 83, serine 379, serine 536, serine 579, serine 581, and serine 590 each carry phosphoserine. A disordered region spans residues 532–558 (GKKTSLSDSTTSAYPGDAGKTGGQLGL). The tract at residues 591–614 (DTEDLKGNGQESGKKGGPKEMANL) is disordered. Serine 664 is subject to Phosphoserine.

The protein belongs to the Rab3-GAP catalytic subunit family. The Rab3 GTPase-activating complex is a heterodimer composed of Rab3gap1 and Rab3gap2. The Rab3 GTPase-activating complex interacts with DMXL2. Interacts with LMAN1. In terms of tissue distribution, in the eye, it is highly expressed within the lens, particularly in the anterior lens epithelium and in a ring corresponding to the equatorial region where anterior cells are differentiating into lens fibers. Also highly expressed in the retina.

Its subcellular location is the cytoplasm. It is found in the endoplasmic reticulum. The protein resides in the golgi apparatus. It localises to the cis-Golgi network. In terms of biological role, catalytic subunit of the Rab3 GTPase-activating (Rab3GAP) complex composed of RAB3GAP1 and RAB3GAP2, which has GTPase-activating protein (GAP) activity towards various Rab3 subfamily members (RAB3A, RAB3B, RAB3C and RAB3D), RAB5A and RAB43, and guanine nucleotide exchange factor (GEF) activity towards RAB18. As part of the Rab3GAP complex, acts as a GAP for Rab3 proteins by converting active RAB3-GTP to the inactive form RAB3-GDP. Rab3 proteins are involved in regulated exocytosis of neurotransmitters and hormones. The Rab3GAP complex, acts as a GEF for RAB18 by promoting the conversion of inactive RAB18-GDP to the active form RAB18-GTP. Recruits and stabilizes RAB18 at the cis-Golgi membrane where RAB18 is most likely activated. Also involved in RAB18 recruitment at the endoplasmic reticulum (ER) membrane where it maintains proper ER structure. Required for normal eye and brain development. May participate in neurodevelopmental processes such as proliferation, migration and differentiation before synapse formation, and non-synaptic vesicular release of neurotransmitters. In Mus musculus (Mouse), this protein is Rab3 GTPase-activating protein catalytic subunit.